A 189-amino-acid polypeptide reads, in one-letter code: MTEYKLVVVGAGGVGKSALTIQLIQNHFVDEYDPTIEDSYRKQVVIDGETCLLDILDTAGQEEYSAMRDQYMRTGEGFLCVFAINNTKSFEDIHQYREQIKRVKDSDDVPMVLVGNKCDLAARTVESRQAQDLARSYGIPYIETSAKTRQGVEDAFYTLVREIRQHKLRKLNPPDESGPGCMSCKCVLS.

The residue at position 1 (methionine 1) is an N-acetylmethionine; in GTPase HRas; alternate. N-acetylthreonine; in GTPase HRas, N-terminally processed is present on threonine 2. GTP contacts are provided by residues 13–18 (GVGKSA), 29–35 (VDEYDPT), 59–60 (AG), 116–119 (NKCD), and 145–147 (SAK). The short motif at 32–40 (YDPTIEDSY) is the Effector region element. Threonine 35 carries a (Microbial infection) O-linked (Glc) threonine; by P.sordellii toxin TcsL glycan. Cysteine 118 is subject to S-nitrosocysteine. Residues 166 to 185 (HKLRKLNPPDESGPGCMSCK) form a hypervariable region region. Lysine 170 is covalently cross-linked (Glycyl lysine isopeptide (Lys-Gly) (interchain with G-Cter in ubiquitin)). A lipid anchor (S-palmitoyl cysteine) is attached at cysteine 181. The S-(15-deoxy-Delta12,14-prostaglandin J2-9-yl)cysteine; alternate moiety is linked to residue cysteine 184. Cysteine 184 carries S-palmitoyl cysteine; alternate lipidation. Cysteine 186 is subject to Cysteine methyl ester. Cysteine 186 is lipidated: S-farnesyl cysteine. A propeptide spans 187-189 (VLS) (removed in mature form).

It belongs to the small GTPase superfamily. Ras family. As to quaternary structure, in its GTP-bound form interacts with PLCE1. Interacts with TBC1D10C. Interacts with RGL3. Interacts with HSPD1. Found in a complex with at least BRAF, HRAS, MAP2K1, MAPK3 and RGS14. Interacts (active GTP-bound form) with RGS14 (via RBD 1 domain). Forms a signaling complex with RASGRP1 and DGKZ. Interacts with RASSF5. Interacts with PDE6D. Interacts with IKZF3. Interacts with RACK1. Interacts with PIK3CG; the interaction is required for membrane recruitment and beta-gamma G protein dimer-dependent activation of the PI3K gamma complex PIK3CG:PIK3R6. Interacts with RAPGEF2. Interacts (active GTP-bound form) with both SHOC2 and PP1c (all isoforms) to form a tertiary complex; SHOC2 and PP1c preferably bind M-Ras/MRAS, but they also bind K-Ras/KRAS, N-Ras/NRAS and H-Ras/HRAS. Interacts (GTP-bound form) with MAPKAP1/SIN1; inhibiting H-Ras/HRAS activity. Post-translationally, palmitoylated by the ZDHHC9-GOLGA7 complex. A continuous cycle of de- and re-palmitoylation regulates rapid exchange between plasma membrane and Golgi. S-nitrosylated; critical for redox regulation. Important for stimulating guanine nucleotide exchange. No structural perturbation on nitrosylation. In terms of processing, the covalent modification of cysteine by 15-deoxy-Delta12,14-prostaglandin-J2 is autocatalytic and reversible. It may occur as an alternative to other cysteine modifications, such as S-nitrosylation and S-palmitoylation. Post-translationally, acetylation at Lys-104 prevents interaction with guanine nucleotide exchange factors (GEFs). Fatty-acylated at Lys-170. In terms of processing, ubiquitinated by the BCR(LZTR1) E3 ubiquitin ligase complex at Lys-170 in a non-degradative manner, leading to inhibit Ras signaling by decreasing Ras association with membranes. Post-translationally, (Microbial infection) Glucosylated at Thr-35 by P.sordellii toxin TcsL. Monoglucosylation completely prevents the recognition of the downstream effector, blocking the GTPases in their inactive form, leading to inhibit Ras signaling. As to expression, widely expressed.

The protein localises to the cell membrane. The protein resides in the golgi apparatus. It is found in the golgi apparatus membrane. It localises to the nucleus. Its subcellular location is the cytoplasm. The protein localises to the perinuclear region. It carries out the reaction GTP + H2O = GDP + phosphate + H(+). Alternates between an inactive form bound to GDP and an active form bound to GTP. Activated by a guanine nucleotide-exchange factor (GEF) and inactivated by a GTPase-activating protein (GAP). Functionally, involved in the activation of Ras protein signal transduction. Ras proteins bind GDP/GTP and possess intrinsic GTPase activity. The sequence is that of GTPase HRas (HRAS) from Homo sapiens (Human).